A 499-amino-acid chain; its full sequence is Ammonium transporter MEP2 (499 aa).

Residues 1–31 are Extracellular-facing; that stretch reads MSYNFTGTPTGEGTGGNSLTTDLNTQFDLAN. Asn4 is a glycosylation site (N-linked (GlcNAc...) asparagine). A helical transmembrane segment spans residues 32-52; it reads MGWIGVASAGVWIMVPGIGLL. Over 53 to 62 the chain is Cytoplasmic; the sequence is YSGLSRKKHA. Residues 63 to 83 traverse the membrane as a helical segment; the sequence is LSLLWASMMASAVCIFQWFFW. Over 84–122 the chain is Extracellular; the sequence is GYSLAFSHNTRGNGFIGTLEFFGFRNVLGAPSSVSSLPD. Residues 123–143 traverse the membrane as a helical segment; it reads ILFAVYQGMFAAVTGALMLGG. Topologically, residues 144 to 152 are cytoplasmic; it reads ACERARLFP. A helical transmembrane segment spans residues 153–173; that stretch reads MMVFLFLWMTIVYCPIACWVW. Over 174-187 the chain is Extracellular; sequence NAEGWLVKLGSLDY. A helical transmembrane segment spans residues 188 to 208; the sequence is AGGLCVHLTSGHGGLVYALIL. The Cytoplasmic segment spans residues 209 to 230; the sequence is GKRNDPVTRKGMPKYKPHSVTS. The helical transmembrane segment at 231–251 threads the bilayer; it reads VVLGTVFLWFGWMFFNGGSAG. The Extracellular segment spans residues 252 to 257; it reads NATIRA. Residues 258-278 form a helical membrane-spanning segment; the sequence is WYSIMSTNLAAACGGLTWMVI. Residues 279 to 289 lie on the Cytoplasmic side of the membrane; the sequence is DYFRCGRKWTT. The helical transmembrane segment at 290–312 threads the bilayer; the sequence is VGLCSGIIAGLVGITPAAGFVPI. At 313–315 the chain is on the extracellular side; that stretch reads WSA. The helical transmembrane segment at 316–338 threads the bilayer; that stretch reads VVIGVVTGAGCNLAVDLKSLLRI. Over 339 to 346 the chain is Cytoplasmic; that stretch reads DDGLDCYS. Residues 347 to 367 form a helical membrane-spanning segment; it reads IHGVGGCIGSVLTGIFAADYV. Over 368-393 the chain is Extracellular; the sequence is NATAGSYISPIDGGWINHHYKQVGYQ. A helical transmembrane segment spans residues 394–414; it reads LAGICAALAWTVTVTSILLLT. The Cytoplasmic portion of the chain corresponds to 415–499; it reads MNAIPFLKLR…SSTKNTDHIV (85 aa). The segment at 428 to 441 is enhancer domain; it reads DEEELGTDAAQIGE. The tract at residues 442 to 449 is linker domain; that stretch reads FTYEESTA. An autoinhibitory domain region spans residues 450–485; the sequence is YIPEPIRSKTSAQMPPPHENIDDKIVGNTDAEKNST. A disordered region spans residues 455-499; that stretch reads IRSKTSAQMPPPHENIDDKIVGNTDAEKNSTPSDASSTKNTDHIV. At Ser457 the chain carries Phosphoserine. Over residues 468-482 the composition is skewed to basic and acidic residues; sequence ENIDDKIVGNTDAEK. Polar residues predominate over residues 483–493; the sequence is NSTPSDASSTK.

This sequence belongs to the ammonia transporter channel (TC 1.A.11.2) family. Phosphorylated at Ser-457 by the TORC1 effector kinase NPR1 under nitrogen-limiting conditions which causes a conformational change in the C-terminal region (CTR) to form an open active conformation. Supplementation of nitrogen source leads to inactivation and instant Ser-457 dephosphorylation via plasma membrane PSR1 and PSR2 redundant phosphatases. In terms of processing, the residue Asn-4 of the protein's N-terminal tail is the only site that is glycosylated.

It is found in the cell membrane. In terms of biological role, transporter for ammonium (both charged and uncharged NH3 and NH4) to use as a nitrogen source. The affinity of MEP2 is about twenty times higher than that of MEP1. MEP3 has the lowest affinity. Under ammonium limitation acts as an ammonium sensor, generating a signal that leads to pseudohyphal (filamentous) growth. This is Ammonium transporter MEP2 from Saccharomyces cerevisiae (strain ATCC 204508 / S288c) (Baker's yeast).